A 296-amino-acid polypeptide reads, in one-letter code: NAD kinase (296 aa).

Asp72 acts as the Proton acceptor in catalysis. NAD(+) contacts are provided by residues 72 to 73 (DG), 146 to 147 (ND), Arg157, Lys174, Asp176, 187 to 192 (TAYALS), and Gln247.

This sequence belongs to the NAD kinase family. Requires a divalent metal cation as cofactor.

Its subcellular location is the cytoplasm. The enzyme catalyses NAD(+) + ATP = ADP + NADP(+) + H(+). Involved in the regulation of the intracellular balance of NAD and NADP, and is a key enzyme in the biosynthesis of NADP. Catalyzes specifically the phosphorylation on 2'-hydroxyl of the adenosine moiety of NAD to yield NADP. In Pseudomonas putida (strain GB-1), this protein is NAD kinase.